The following is a 205-amino-acid chain: MELPVNSFDKKEASTLTVADSAFGSEYKEGLVHQVVNAYLAGGRAGTKAQKTRREVSGSGAKPWRQKGTGRARAGSSRSPLWRSGGVAFAAKPRDFTQKVNRKMYRSAMASILSELIRREQLVVVDSLKLNEPKTRELKESLKKLNLGNVLIIIDGDDRNINLASRNMVGVSVCDALHVDPVSLVAAENIVVTVDAVKRLEERLS.

The segment at 44–79 is disordered; it reads RAGTKAQKTRREVSGSGAKPWRQKGTGRARAGSSRS.

This sequence belongs to the universal ribosomal protein uL4 family. In terms of assembly, part of the 50S ribosomal subunit.

In terms of biological role, one of the primary rRNA binding proteins, this protein initially binds near the 5'-end of the 23S rRNA. It is important during the early stages of 50S assembly. It makes multiple contacts with different domains of the 23S rRNA in the assembled 50S subunit and ribosome. Functionally, forms part of the polypeptide exit tunnel. The sequence is that of Large ribosomal subunit protein uL4 from Coxiella burnetii (strain Dugway 5J108-111).